Here is a 265-residue protein sequence, read N- to C-terminus: DNA repair protein RecO (265 aa).

Belongs to the RecO family.

In terms of biological role, involved in DNA repair and RecF pathway recombination. This chain is DNA repair protein RecO, found in Mycobacterium marinum (strain ATCC BAA-535 / M).